Reading from the N-terminus, the 334-residue chain is Adenine deaminase (334 aa).

Residues H17, H19, and H197 each coordinate Zn(2+). E200 acts as the Proton donor in catalysis. D278 contacts Zn(2+). D279 contributes to the substrate binding site.

It belongs to the metallo-dependent hydrolases superfamily. Adenosine and AMP deaminases family. Adenine deaminase type 2 subfamily. Requires Zn(2+) as cofactor.

It carries out the reaction adenine + H2O + H(+) = hypoxanthine + NH4(+). Functionally, catalyzes the hydrolytic deamination of adenine to hypoxanthine. Plays an important role in the purine salvage pathway and in nitrogen catabolism. The protein is Adenine deaminase of Rhodospirillum rubrum (strain ATCC 11170 / ATH 1.1.1 / DSM 467 / LMG 4362 / NCIMB 8255 / S1).